The following is a 439-amino-acid chain: Mitochondrial distribution and morphology protein 12 (439 aa).

Residues 1 to 439 enclose the SMP-LTD domain; it reads MSIDVNWRFA…VYPSFWTFLI (439 aa). Disordered regions lie at residues 70–103, 185–274, and 354–386; these read YEED…LNEP, GWSD…PPRM, and PEQQ…RHGG. The span at 78–91 shows a compositional bias: basic and acidic residues; the sequence is TSDASEERGEEHSS. A compositionally biased stretch (polar residues) spans 215–245; sequence DTSNSTSRPSTANTLPSHPSGSSKNSGQAAT. 2 stretches are compositionally biased toward basic and acidic residues: residues 247–261 and 362–371; these read RNDH…HLED and SAGDDHRPQS.

Belongs to the MDM12 family. As to quaternary structure, component of the ER-mitochondria encounter structure (ERMES) or MDM complex, composed of mmm1, mdm10, mdm12 and mdm34. A mmm1 homodimer associates with one molecule of mdm12 on each side in a pairwise head-to-tail manner, and the SMP-LTD domains of mmm1 and mdm12 generate a continuous hydrophobic tunnel for phospholipid trafficking.

The protein localises to the mitochondrion outer membrane. It localises to the endoplasmic reticulum membrane. Its function is as follows. Component of the ERMES/MDM complex, which serves as a molecular tether to connect the endoplasmic reticulum (ER) and mitochondria. Components of this complex are involved in the control of mitochondrial shape and protein biogenesis, and function in nonvesicular lipid trafficking between the ER and mitochondria. Mdm12 is required for the interaction of the ER-resident membrane protein mmm1 and the outer mitochondrial membrane-resident beta-barrel protein mdm10. The mdm12-mmm1 subcomplex functions in the major beta-barrel assembly pathway that is responsible for biogenesis of all mitochondrial outer membrane beta-barrel proteins, and acts in a late step after the SAM complex. The mdm10-mdm12-mmm1 subcomplex further acts in the TOM40-specific pathway after the action of the mdm12-mmm1 complex. Essential for establishing and maintaining the structure of mitochondria and maintenance of mtDNA nucleoids. The protein is Mitochondrial distribution and morphology protein 12 of Aspergillus fumigatus (strain CBS 144.89 / FGSC A1163 / CEA10) (Neosartorya fumigata).